The primary structure comprises 245 residues: 3-deoxy-manno-octulosonate cytidylyltransferase (245 aa).

It belongs to the KdsB family.

The protein resides in the cytoplasm. The catalysed reaction is 3-deoxy-alpha-D-manno-oct-2-ulosonate + CTP = CMP-3-deoxy-beta-D-manno-octulosonate + diphosphate. It participates in nucleotide-sugar biosynthesis; CMP-3-deoxy-D-manno-octulosonate biosynthesis; CMP-3-deoxy-D-manno-octulosonate from 3-deoxy-D-manno-octulosonate and CTP: step 1/1. Its pathway is bacterial outer membrane biogenesis; lipopolysaccharide biosynthesis. Its function is as follows. Activates KDO (a required 8-carbon sugar) for incorporation into bacterial lipopolysaccharide in Gram-negative bacteria. The protein is 3-deoxy-manno-octulosonate cytidylyltransferase of Fusobacterium nucleatum subsp. nucleatum (strain ATCC 25586 / DSM 15643 / BCRC 10681 / CIP 101130 / JCM 8532 / KCTC 2640 / LMG 13131 / VPI 4355).